The following is a 99-amino-acid chain: Aspartyl/glutamyl-tRNA(Asn/Gln) amidotransferase subunit C (99 aa).

Belongs to the GatC family. As to quaternary structure, heterotrimer of A, B and C subunits.

It catalyses the reaction L-glutamyl-tRNA(Gln) + L-glutamine + ATP + H2O = L-glutaminyl-tRNA(Gln) + L-glutamate + ADP + phosphate + H(+). The enzyme catalyses L-aspartyl-tRNA(Asn) + L-glutamine + ATP + H2O = L-asparaginyl-tRNA(Asn) + L-glutamate + ADP + phosphate + 2 H(+). Allows the formation of correctly charged Asn-tRNA(Asn) or Gln-tRNA(Gln) through the transamidation of misacylated Asp-tRNA(Asn) or Glu-tRNA(Gln) in organisms which lack either or both of asparaginyl-tRNA or glutaminyl-tRNA synthetases. The reaction takes place in the presence of glutamine and ATP through an activated phospho-Asp-tRNA(Asn) or phospho-Glu-tRNA(Gln). The protein is Aspartyl/glutamyl-tRNA(Asn/Gln) amidotransferase subunit C of Thermobifida fusca (strain YX).